Reading from the N-terminus, the 378-residue chain is Putative UDP-N-acetylglucosamine 2-epimerase (378 aa).

It belongs to the UDP-N-acetylglucosamine 2-epimerase family.

It localises to the cytoplasm. The enzyme catalyses UDP-N-acetyl-alpha-D-glucosamine = UDP-N-acetyl-alpha-D-mannosamine. This is Putative UDP-N-acetylglucosamine 2-epimerase from Thermotoga maritima (strain ATCC 43589 / DSM 3109 / JCM 10099 / NBRC 100826 / MSB8).